Consider the following 317-residue polypeptide: Methionyl-tRNA formyltransferase (317 aa).

110 to 113 (SLLP) contacts (6S)-5,6,7,8-tetrahydrofolate.

The protein belongs to the Fmt family.

The catalysed reaction is L-methionyl-tRNA(fMet) + (6R)-10-formyltetrahydrofolate = N-formyl-L-methionyl-tRNA(fMet) + (6S)-5,6,7,8-tetrahydrofolate + H(+). In terms of biological role, attaches a formyl group to the free amino group of methionyl-tRNA(fMet). The formyl group appears to play a dual role in the initiator identity of N-formylmethionyl-tRNA by promoting its recognition by IF2 and preventing the misappropriation of this tRNA by the elongation apparatus. This chain is Methionyl-tRNA formyltransferase, found in Lactiplantibacillus plantarum (strain ATCC BAA-793 / NCIMB 8826 / WCFS1) (Lactobacillus plantarum).